A 113-amino-acid chain; its full sequence is T cell receptor alpha variable 8-1 (113 aa).

The first 20 residues, 1 to 20, serve as a signal peptide directing secretion; that stretch reads MLLLLIPVLGMIFALRDARA. An Ig-like domain is found at 21-113; sequence QSVSQHNHHV…DTAEYFCAVN (93 aa). Residues Cys-42 and Cys-110 are joined by a disulfide bond. N-linked (GlcNAc...) asparagine glycosylation is present at Asn-43.

In terms of assembly, alpha-beta TR is a heterodimer composed of an alpha and beta chain; disulfide-linked. The alpha-beta TR is associated with the transmembrane signaling CD3 coreceptor proteins to form the TR-CD3 (TcR or TCR). The assembly of alpha-beta TR heterodimers with CD3 occurs in the endoplasmic reticulum where a single alpha-beta TR heterodimer associates with one CD3D-CD3E heterodimer, one CD3G-CD3E heterodimer and one CD247 homodimer forming a stable octameric structure. CD3D-CD3E and CD3G-CD3E heterodimers preferentially associate with TR alpha and TR beta chains, respectively. The association of the CD247 homodimer is the last step of TcR assembly in the endoplasmic reticulum and is required for transport to the cell surface.

The protein localises to the cell membrane. V region of the variable domain of T cell receptor (TR) alpha chain that participates in the antigen recognition. Alpha-beta T cell receptors are antigen specific receptors which are essential to the immune response and are present on the cell surface of T lymphocytes. Recognize peptide-major histocompatibility (MH) (pMH) complexes that are displayed by antigen presenting cells (APC), a prerequisite for efficient T cell adaptive immunity against pathogens. Binding of alpha-beta TR to pMH complex initiates TR-CD3 clustering on the cell surface and intracellular activation of LCK that phosphorylates the ITAM motifs of CD3G, CD3D, CD3E and CD247 enabling the recruitment of ZAP70. In turn ZAP70 phosphorylates LAT, which recruits numerous signaling molecules to form the LAT signalosome. The LAT signalosome propagates signal branching to three major signaling pathways, the calcium, the mitogen-activated protein kinase (MAPK) kinase and the nuclear factor NF-kappa-B (NF-kB) pathways, leading to the mobilization of transcription factors that are critical for gene expression and essential for T cell growth and differentiation. The T cell repertoire is generated in the thymus, by V-(D)-J rearrangement. This repertoire is then shaped by intrathymic selection events to generate a peripheral T cell pool of self-MH restricted, non-autoaggressive T cells. Post-thymic interaction of alpha-beta TR with the pMH complexes shapes TR structural and functional avidity. The sequence is that of T cell receptor alpha variable 8-1 from Homo sapiens (Human).